We begin with the raw amino-acid sequence, 399 residues long: MIKKHEYKILYKRILFTCFILIVYIFGSNISIVGSEGIYDNKDTFFKLAVSNVGGDLHTLNVFSLGLGPWLTSLVIIMLLNYRNLDQATKQTRSEKHYKERIITIVFAIFQSYFVISTYIHNNFIKDSNIILLMLILVAGTMLLVWLADQNITYGICGPMPIVLTSLIKSLFNNQHFFKLSVSVLLLILVIVTLVIALLILLFIELSEYRLNYKDIMNNSTNKTPTYLAWKLNPAGSISIMISLSVYVLLNNMINLIATLLGSNANFEFLSFANPIGIMFYIVLQIVLSYLLSRFLINTKKKADEFLKNGNYFDPIRPGRETERYLNSKARRVCWTGAILVALILAVPLYSTLLVPNLSTEIYFSMQLIILVYISINIGETIRTYLYFDRYKQILNKYW.

10 consecutive transmembrane segments (helical) span residues 14–34 (ILFTCFILIVYIFGSNISIVG), 60–80 (LNVFSLGLGPWLTSLVIIMLL), 102–122 (IITIVFAIFQSYFVISTYIHN), 128–148 (SNIILLMLILVAGTMLLVWLA), 152–172 (ITYGICGPMPIVLTSLIKSLF), 184–204 (VLLLILVIVTLVIALLILLFI), 238–258 (ISIMISLSVYVLLNNMINLIA), 272–292 (FANPIGIMFYIVLQIVLSYLL), 335–355 (WTGAILVALILAVPLYSTLLV), and 362–382 (IYFSMQLIILVYISINIGETI).

Belongs to the SecY/SEC61-alpha family. SecY2 subfamily. As to quaternary structure, component of the accessory SecA2/SecY2 protein translocase complex required to export cell wall proteins. May form heterotrimers with SecE and SecG subunits.

The protein resides in the cell membrane. Functionally, part of the accessory SecA2/SecY2 system specifically required for export of possible cell wall proteins. The central subunit of a protein translocation channel. The sequence is that of Accessory Sec system protein translocase subunit SecY2 from Staphylococcus haemolyticus (strain JCSC1435).